The following is an 861-amino-acid chain: DNA mismatch repair protein MutS (861 aa).

614 to 621 (GPNMGGKS) contributes to the ATP binding site.

This sequence belongs to the DNA mismatch repair MutS family.

Its function is as follows. This protein is involved in the repair of mismatches in DNA. It is possible that it carries out the mismatch recognition step. This protein has a weak ATPase activity. The chain is DNA mismatch repair protein MutS from Mannheimia succiniciproducens (strain KCTC 0769BP / MBEL55E).